We begin with the raw amino-acid sequence, 60 residues long: Large ribosomal subunit protein bL32 (60 aa).

Belongs to the bacterial ribosomal protein bL32 family.

The sequence is that of Large ribosomal subunit protein bL32 from Streptococcus pneumoniae serotype 4 (strain ATCC BAA-334 / TIGR4).